A 742-amino-acid chain; its full sequence is Synaptic vesicle glycoprotein 2A (742 aa).

The tract at residues 1–57 is interaction with SYT1; that stretch reads MEEGFRDRAAFIRGAKDIAKEVKKHAAKKVVKGLDRVQDEYSRRSYSRFEEEDDDDD. At 1-169 the chain is on the cytoplasmic side; that stretch reads MEEGFRDRAA…GHGRFQWTLY (169 aa). The span at 33–49 shows a compositional bias: basic and acidic residues; it reads GLDRVQDEYSRRSYSRF. A disordered region spans residues 33-144; sequence GLDRVQDEYS…GRGEAQRRKE (112 aa). Phosphoserine is present on residues Ser-80 and Ser-81. The residue at position 84 (Thr-84) is a Phosphothreonine. A compositionally biased stretch (gly residues) spans 122 to 137; it reads VRGGLSDGEGPPGGRG. At Ser-127 the chain carries Phosphoserine. The helical transmembrane segment at 170-190 threads the bilayer; it reads FVLGLALMADGVEVFVVGFVL. The Extracellular portion of the chain corresponds to 191–205; that stretch reads PSAEKDMCLSDSNKG. Residues 206–226 form a helical membrane-spanning segment; sequence MLGLIVYLGMMVGAFLWGGLA. The Cytoplasmic portion of the chain corresponds to 227–233; that stretch reads DRLGRRQ. A helical membrane pass occupies residues 234-254; the sequence is CLLISLSVNSVFAFFSSFVQG. Over 255 to 262 the chain is Extracellular; the sequence is YGTFLFCR. The helical transmembrane segment at 263–283 threads the bilayer; it reads LLSGVGIGGSIPIVFSYFSEF. Residues 284–294 lie on the Cytoplasmic side of the membrane; that stretch reads LAQEKRGEHLS. A helical transmembrane segment spans residues 295–315; sequence WLCMFWMIGGVYAAAMAWAII. Residues 316 to 334 lie on the Extracellular side of the membrane; it reads PHYGWSFQMGSAYQFHSWR. A helical membrane pass occupies residues 335 to 355; sequence VFVLVCAFPSVFAIGALTTQP. The Cytoplasmic portion of the chain corresponds to 356–447; that stretch reads ESPRFFLENG…CFGPEYRRIT (92 aa). The residue at position 393 (Ser-393) is a Phosphoserine. The chain crosses the membrane as a helical span at residues 448–468; sequence LMMMGVWFTMSFSYYGLTVWF. The Extracellular segment spans residues 469-598; it reads PDMIRHLQAV…GTGEGAYMVY (130 aa). Tyr-480 is modified (phosphotyrosine). Asn-498, Asn-548, and Asn-573 each carry an N-linked (GlcNAc...) asparagine glycan. Residues 599 to 619 form a helical membrane-spanning segment; it reads FVSFLGTLAVLPGNIVSALLM. Topologically, residues 620-626 are cytoplasmic; sequence DKIGRLR. Residues 627–647 form a helical membrane-spanning segment; it reads MLAGSSVMSCVSCFFLSFGNS. The Extracellular portion of the chain corresponds to 648–651; sequence ESAM. The chain crosses the membrane as a helical span at residues 652–672; sequence IALLCLFGGVSIASWNALDVL. The Cytoplasmic portion of the chain corresponds to 673-690; sequence TVGLYPSDKRTTAFGFLN. A helical transmembrane segment spans residues 691–711; the sequence is ALCKLAAVLGISIFTSFVGIT. Lys-712 is a topological domain (extracellular). The helical transmembrane segment at 713-733 threads the bilayer; the sequence is AAPIPFASAALALGSSLALKL. At 734–742 the chain is on the cytoplasmic side; sequence PETRGQVLQ.

The protein belongs to the major facilitator superfamily. Interacts with SYT1/synaptotagmin-1 in a calcium-dependent manner. Binds the adapter protein complex AP-2. Post-translationally, phosphorylation by CK1 of the N-terminal cytoplasmic domain regulates interaction with SYT1. In terms of processing, N-glycosylated.

It localises to the presynapse. The protein localises to the cytoplasmic vesicle. Its subcellular location is the secretory vesicle. It is found in the synaptic vesicle membrane. In terms of biological role, plays a role in the control of regulated secretion in neural and endocrine cells, enhancing selectively low-frequency neurotransmission. Positively regulates vesicle fusion by maintaining the readily releasable pool of secretory vesicles. This Macaca fascicularis (Crab-eating macaque) protein is Synaptic vesicle glycoprotein 2A (SV2A).